The chain runs to 144 residues: Transmembrane protein 170A (144 aa).

Over 1-50 (MEREGSGGSGGSAGLLQQILSLKVVPRVGNGTLCPNSTSLCSFPEMWYGV) the chain is Lumenal. Residues Asn30 and Asn36 are each glycosylated (N-linked (GlcNAc...) asparagine). Residues 51 to 71 (FLWALVSSLFFHVPAGLLALF) form a helical membrane-spanning segment. Residues 72-85 (TLRHHKYGRFMSVS) are Cytoplasmic-facing. Residues 86–106 (ILLMGIVGPITAGILTSAAIA) traverse the membrane as a helical segment. Over 107–116 (GVYRAAGKEM) the chain is Lumenal. The chain crosses the membrane as a helical span at residues 117–137 (IPFEALTLGTGQTFCVLVVSF). The Cytoplasmic portion of the chain corresponds to 138–144 (LRILATL).

Belongs to the TMEM170 family. In terms of assembly, interacts with RTN4.

Its subcellular location is the endoplasmic reticulum membrane. It localises to the nucleus envelope. Acts as a regulator of endoplasmic reticulum (ER) and nuclear envelope (NE) morphogenesis. Affects the ratio between tubular ER and ER sheets by promoting sheet formation at the expense of tubules. Influences NE expansion, nuclear pore complex formation and proper localization of inner nuclear membrane proteins. This Homo sapiens (Human) protein is Transmembrane protein 170A (TMEM170A).